Consider the following 1673-residue polypeptide: Protein TIC 214 (1673 aa).

Transmembrane regions (helical) follow at residues 32-52 (AGLY…ILLI), 70-90 (LILG…YIAF), 93-113 (PYTL…GNNL), 130-150 (LEIL…TCIF), 170-190 (MVFL…VLMC), and 218-238 (FFLV…IQSL). 2 stretches are compositionally biased toward basic and acidic residues: residues 264-276 (LKKS…GKST) and 283-298 (SHEK…SKLE). 4 disordered regions span residues 264–302 (LKKS…NEDE), 547–611 (VVFD…YSIR), 1120–1146 (NKQS…TDNL), and 1370–1433 (QQNQ…SEDD). The segment covering 562–586 (DNGNIQNNSSDKTINPQNNLTNLKP) has biased composition (polar residues). Over residues 597–611 (TTEKEPKDDKSYSIR) the composition is skewed to basic and acidic residues. Polar residues predominate over residues 1120–1135 (NKQSLQKRNSSGNSNL). Residues 1370–1379 (QQNQTTTKMN) are compositionally biased toward low complexity. 2 stretches are compositionally biased toward basic and acidic residues: residues 1380–1399 (TETK…KKTE) and 1406–1423 (TKNK…KETE).

Belongs to the TIC214 family. As to quaternary structure, part of the Tic complex.

Its subcellular location is the plastid. The protein localises to the chloroplast inner membrane. Its function is as follows. Involved in protein precursor import into chloroplasts. May be part of an intermediate translocation complex acting as a protein-conducting channel at the inner envelope. This chain is Protein TIC 214, found in Cuscuta gronovii (Common dodder).